A 140-amino-acid chain; its full sequence is Con-Ins Im2 (140 aa).

Positions 1–29 (MALTWPSSPPVLLTLLLSLLALQLCAVYG) are cleaved as a signal peptide. 4 disulfides stabilise this stretch: Cys-35–Cys-123, Cys-50–Cys-126, Cys-62–Cys-139, and Cys-125–Cys-130. The propeptide at 64–110 (PRGYVSNWFTKRSAPNKPAETFVDQNLRGVLLNKREALSYLRPREPR) is c peptide. Glu-134 carries the 4-carboxyglutamate; partial modification.

Belongs to the insulin family. Heterodimer of A and B chains; disulfide-linked. In terms of tissue distribution, expressed by the venom gland.

It is found in the secreted. Functionally, this venom insulin facilitates prey capture by rapidly inducing hypoglycemic shock. Intraperitoneal injection of this peptide into zebrafish lowers blood glucose with the same potency than human insulin. In vivo, when applied to water, this peptide reduces overall locomotor activity of zebrafish larvae, observed as a significant decrease in the percentage of time spent swimming and movement frequency. The sequence is that of Con-Ins Im2 from Conus imperialis (Imperial cone).